Reading from the N-terminus, the 232-residue chain is Endonuclease NucS (232 aa).

The protein belongs to the NucS endonuclease family.

The protein resides in the cytoplasm. Functionally, cleaves both 3' and 5' ssDNA extremities of branched DNA structures. In Mycobacteroides abscessus (strain ATCC 19977 / DSM 44196 / CCUG 20993 / CIP 104536 / JCM 13569 / NCTC 13031 / TMC 1543 / L948) (Mycobacterium abscessus), this protein is Endonuclease NucS.